The following is a 618-amino-acid chain: Probable peptide transporter ptr2 (618 aa).

Ser-22 carries the post-translational modification Phosphoserine. Tyr-23 carries the post-translational modification Phosphotyrosine. Ser-25 and Ser-33 each carry phosphoserine. A disordered region spans residues 26–50 (KEKKADGSATINTADEQSSTDELQK). Residues 34–50 (ATINTADEQSSTDELQK) show a composition bias toward polar residues. Thr-35 bears the Phosphothreonine mark. At Ser-44 the chain carries Phosphoserine. Thr-45 is modified (phosphothreonine). Ser-51 and Ser-53 each carry phosphoserine. Thr-54 carries the phosphothreonine modification. Helical transmembrane passes span 131 to 151 (GLSNFFTFWCYVTPVGAALIA), 161 to 181 (IVCSAVIYFIGILILTCTAIP), 187 to 207 (GKSMGGFVVSLIIIGLGTGGI), 247 to 267 (YMIFYWSINVGSLSVLATTSL), 273 to 293 (FVYAYLLPLCVFVIPLIILAV), 400 to 420 (FDSIALIIFIPICDNIIYPLL), 430 to 450 (ILRITLGFMFATASMIYAAVL), 475 to 495 (VWIQIPAYVLIAFSEIFASIT), 510 to 530 (SIITALFLFTNAFGAILSICI), and 541 to 561 (WMYTGIAVTAFIAGIMFWVCF). At Ser-594 the chain carries Phosphoserine. Residue Thr-618 is modified to Phosphothreonine.

This sequence belongs to the major facilitator superfamily. Proton-dependent oligopeptide transporter (POT/PTR) (TC 2.A.17) family.

It is found in the membrane. Functionally, uptake of small peptides. This chain is Probable peptide transporter ptr2 (ptr2), found in Schizosaccharomyces pombe (strain 972 / ATCC 24843) (Fission yeast).